Reading from the N-terminus, the 301-residue chain is Acetylglutamate kinase (301 aa).

Residues 68–69 (GG), Arg-90, and Asn-195 each bind substrate.

Belongs to the acetylglutamate kinase family. ArgB subfamily.

It is found in the cytoplasm. It carries out the reaction N-acetyl-L-glutamate + ATP = N-acetyl-L-glutamyl 5-phosphate + ADP. Its pathway is amino-acid biosynthesis; L-arginine biosynthesis; N(2)-acetyl-L-ornithine from L-glutamate: step 2/4. Its function is as follows. Catalyzes the ATP-dependent phosphorylation of N-acetyl-L-glutamate. The polypeptide is Acetylglutamate kinase (Pseudomonas putida (strain GB-1)).